Here is a 387-residue protein sequence, read N- to C-terminus: Pepsin II-2/3 (387 aa).

The first 15 residues, 1–15 (MKWLLLLGLLALSEC), serve as a signal peptide directing secretion. A propeptide spans 16-59 (IVHKVPLVRKKSLRKNLIEKGLLQDYLKTHTPNPATKYFPKETF) (activation peptide). Positions 75-384 (YFGTISIGTP…DRANNQLGLA (310 aa)) constitute a Peptidase A1 domain. The active site involves Asp-93. Cys-106 and Cys-111 are disulfide-bonded. The residue at position 129 (Ser-129) is a Phosphoserine. Cys-267 and Cys-271 are oxidised to a cystine. The active site involves Asp-276. The cysteines at positions 310 and 343 are disulfide-linked.

It belongs to the peptidase A1 family.

It is found in the secreted. The enzyme catalyses Preferential cleavage: hydrophobic, preferably aromatic, residues in P1 and P1' positions. Cleaves 1-Phe-|-Val-2, 4-Gln-|-His-5, 13-Glu-|-Ala-14, 14-Ala-|-Leu-15, 15-Leu-|-Tyr-16, 16-Tyr-|-Leu-17, 23-Gly-|-Phe-24, 24-Phe-|-Phe-25 and 25-Phe-|-Tyr-26 bonds in the B chain of insulin.. Shows particularly broad specificity; although bonds involving phenylalanine and leucine are preferred, many others are also cleaved to some extent. This Oryctolagus cuniculus (Rabbit) protein is Pepsin II-2/3.